Consider the following 383-residue polypeptide: Neuropeptide Y receptor type 1 (383 aa).

At Met1 to Ala44 the chain is on the extracellular side. Asn2, Asn11, and Asn17 each carry an N-linked (GlcNAc...) asparagine glycan. The helical transmembrane segment at Leu45–Ile65 threads the bilayer. Over Leu66–Asn76 the chain is Cytoplasmic. A helical membrane pass occupies residues Ile77–Thr97. The Extracellular segment spans residues Phe98–Asn116. A disulfide bridge links Cys113 with Cys198. Residues Pro117–Glu137 form a helical membrane-spanning segment. Residues Arg138–His154 lie on the Cytoplasmic side of the membrane. A helical membrane pass occupies residues Ala155–Ile175. Topologically, residues Tyr176 to Tyr211 are extracellular. Asn186 carries N-linked (GlcNAc...) asparagine glycosylation. A helical membrane pass occupies residues Thr212–Phe232. The Cytoplasmic portion of the chain corresponds to Lys233 to Arg260. The helical transmembrane segment at Ile261–Ile281 threads the bilayer. Over Phe282 to Asn299 the chain is Extracellular. Residues Leu300 to Tyr320 form a helical membrane-spanning segment. Residues Gly321 to Ile383 are Cytoplasmic-facing. Cys338 carries S-palmitoyl cysteine lipidation. At Ser368 the chain carries Phosphoserine.

This sequence belongs to the G-protein coupled receptor 1 family.

The protein localises to the cell membrane. Its function is as follows. Receptor for neuropeptide Y and peptide YY. The polypeptide is Neuropeptide Y receptor type 1 (NPY1R) (Bos taurus (Bovine)).